Reading from the N-terminus, the 416-residue chain is Type II methyltransferase M.PspPI (416 aa).

An SAM-dependent MTase C5-type domain is found at 77–410 (YSLVELFAGA…KAIIRMLNAA (334 aa)). The active site involves cysteine 149.

Belongs to the class I-like SAM-binding methyltransferase superfamily. C5-methyltransferase family.

It catalyses the reaction a 2'-deoxycytidine in DNA + S-adenosyl-L-methionine = a 5-methyl-2'-deoxycytidine in DNA + S-adenosyl-L-homocysteine + H(+). Functionally, a methylase, recognizes the double-stranded sequence 5'-GGNCC-3', methylates C-4 on both strands, and protects the DNA from cleavage by the PspPI endonuclease. This is Type II methyltransferase M.PspPI from Psychrobacter sp. (strain TA137).